A 239-amino-acid polypeptide reads, in one-letter code: 1-(5-phosphoribosyl)-5-[(5-phosphoribosylamino)methylideneamino] imidazole-4-carboxamide isomerase (239 aa).

Catalysis depends on D8, which acts as the Proton acceptor. D129 functions as the Proton donor in the catalytic mechanism.

This sequence belongs to the HisA/HisF family.

It is found in the cytoplasm. It carries out the reaction 1-(5-phospho-beta-D-ribosyl)-5-[(5-phospho-beta-D-ribosylamino)methylideneamino]imidazole-4-carboxamide = 5-[(5-phospho-1-deoxy-D-ribulos-1-ylimino)methylamino]-1-(5-phospho-beta-D-ribosyl)imidazole-4-carboxamide. It functions in the pathway amino-acid biosynthesis; L-histidine biosynthesis; L-histidine from 5-phospho-alpha-D-ribose 1-diphosphate: step 4/9. The chain is 1-(5-phosphoribosyl)-5-[(5-phosphoribosylamino)methylideneamino] imidazole-4-carboxamide isomerase from Bacillus cytotoxicus (strain DSM 22905 / CIP 110041 / 391-98 / NVH 391-98).